The primary structure comprises 276 residues: Pyrroline-5-carboxylate reductase (276 aa).

Belongs to the pyrroline-5-carboxylate reductase family.

Its subcellular location is the cytoplasm. It catalyses the reaction L-proline + NADP(+) = (S)-1-pyrroline-5-carboxylate + NADPH + 2 H(+). The enzyme catalyses L-proline + NAD(+) = (S)-1-pyrroline-5-carboxylate + NADH + 2 H(+). The protein operates within amino-acid biosynthesis; L-proline biosynthesis; L-proline from L-glutamate 5-semialdehyde: step 1/1. This Arabidopsis thaliana (Mouse-ear cress) protein is Pyrroline-5-carboxylate reductase (PROC1).